A 384-amino-acid polypeptide reads, in one-letter code: N-acetylneuraminate epimerase (384 aa).

An N-terminal signal peptide occupies residues 1 to 29; sequence MGMQMKNFKKMMTLMALCLSVAITTSGYA. Kelch repeat units follow at residues 51–95, 97–149, 151–184, 185–230, 233–282, 304–353, and 355–384; these read VIYV…VFLN, ELYV…VKLN, TMVLITGGVNEHIFDKYFIDIEAADESEKNKVIY, NYFN…VMEN, LMLI…LAGA, QNYT…SYGD, and VFLIGGENAKGKPVSSVTSFTMRDGNLLIK. Glu-239 acts as the Proton acceptor in catalysis.

This sequence belongs to the NanM family. In terms of assembly, homodimer.

It localises to the periplasm. It carries out the reaction N-acetyl-alpha-neuraminate = N-acetyl-beta-neuraminate. Its function is as follows. Converts alpha-N-acetylneuranimic acid (Neu5Ac) to the beta-anomer, accelerating the equilibrium between the alpha- and beta-anomers. Probably facilitates sialidase-negative bacteria to compete successfully for limited amounts of extracellular Neu5Ac, which is likely taken up in the beta-anomer. In addition, the rapid removal of sialic acid from solution might be advantageous to the bacterium to damp down host responses. The sequence is that of N-acetylneuraminate epimerase from Salmonella enteritidis PT4 (strain P125109).